A 310-amino-acid polypeptide reads, in one-letter code: ADP-L-glycero-D-manno-heptose-6-epimerase (310 aa).

NADP(+)-binding positions include Phe10–Ile11, Asp31–Asn32, Lys38, Lys53, Glu75–Ser79, and Asn92. The active-site Proton acceptor is Tyr140. Lys144 contacts NADP(+). Position 169 (Asn169) interacts with substrate. Residues Val170 and Lys178 each contribute to the NADP(+) site. Lys178 serves as the catalytic Proton acceptor. Residues Ser180, His187, Phe201–Ser204, Arg209, and Tyr272 contribute to the substrate site.

It belongs to the NAD(P)-dependent epimerase/dehydratase family. HldD subfamily. Homopentamer. Requires NADP(+) as cofactor.

It carries out the reaction ADP-D-glycero-beta-D-manno-heptose = ADP-L-glycero-beta-D-manno-heptose. The protein operates within nucleotide-sugar biosynthesis; ADP-L-glycero-beta-D-manno-heptose biosynthesis; ADP-L-glycero-beta-D-manno-heptose from D-glycero-beta-D-manno-heptose 7-phosphate: step 4/4. Functionally, catalyzes the interconversion between ADP-D-glycero-beta-D-manno-heptose and ADP-L-glycero-beta-D-manno-heptose via an epimerization at carbon 6 of the heptose. The sequence is that of ADP-L-glycero-D-manno-heptose-6-epimerase from Klebsiella pneumoniae subsp. pneumoniae (strain ATCC 700721 / MGH 78578).